Reading from the N-terminus, the 678-residue chain is Electrogenic aspartate/glutamate antiporter SLC25A12, mitochondrial (678 aa).

Residue Ala2 is modified to N-acetylalanine. The tract at residues 2–294 is regulatory N-terminal domain; sequence AVKVQTTKRG…TLADIERIAP (293 aa). Topologically, residues 2–329 are mitochondrial intermembrane; it reads AVKVQTTKRG…WLQIAESAYR (328 aa). 5 residues coordinate Ca(2+): Asp65, Thr67, Asp69, Leu71, and Glu76. EF-hand domains follow at residues 65-76, 86-121, 125-155, and 157-192; these read DQTKDGLISYQE, APDSMFIVAFQLFDKSGNGEVTFENVKEIFGQTIIH, PFNWDCEFIRLHFGHNRKKHLNYTEFTQFLQ, and LQLEHARQAFALKDKSKSGMISGLDFSDIMVTIRSH. A linker loop domain region spans residues 295–310; that stretch reads LAEGALPYNLAELQRQ. The segment at 320-612 is carrier domain; sequence WLQIAESAYR…RWFYIDFGGL (293 aa). 3 Solcar repeats span residues 324–416, 424–508, and 516–604; these read AESA…VRDK, VPLP…CKLL, and VGGL…LQRW. The helical transmembrane segment at 330–347 threads the bilayer; it reads FTLGSVAGAVGATAVYPI. Over 348–390 the chain is Mitochondrial matrix; it reads DLVKTRMQNQRGSGSVVGELMYKNSFDCFKKVLRYEGFFGLYR. The chain crosses the membrane as a helical span at residues 391-410; that stretch reads GLIPQLIGVAPEKAIKLTVN. The Mitochondrial intermembrane portion of the chain corresponds to 411–433; that stretch reads DFVRDKFTRRDGSVPLPAEVLAG. Residues 434–447 form a helical membrane-spanning segment; sequence GCAGGSQVIFTNPL. The Mitochondrial matrix segment spans residues 448 to 482; sequence EIVKIRLQVAGEITTGPRVSALNVLRDLGIFGLYK. A helical transmembrane segment spans residues 483 to 502; that stretch reads GAKACFLRDIPFSAIYFPVY. Residues 503 to 521 are Mitochondrial intermembrane-facing; sequence AHCKLLLADENGHVGGLNL. A helical membrane pass occupies residues 522 to 539; the sequence is LAAGAMAGVPAASLVTPA. At 540 to 578 the chain is on the mitochondrial matrix side; it reads DVIKTRLQVAARAGQTTYSGVIDCFRKILREEGPSAFWK. The chain crosses the membrane as a helical span at residues 579–598; sequence GTAARVFRSSPQFGVTLVTY. Residues 599–678 lie on the Mitochondrial intermembrane side of the membrane; that stretch reads ELLQRWFYID…QPKAAVAATQ (80 aa). Positions 613–675 are C-terminal domain; it reads KPAGSEPTPK…AVVQPKAAVA (63 aa).

The protein belongs to the mitochondrial carrier (TC 2.A.29) family. As to quaternary structure, homodimer (via N-terminus). As to expression, expressed predominantly in the heart and skeletal muscle, weakly in brain and kidney.

Its subcellular location is the mitochondrion inner membrane. The enzyme catalyses L-aspartate(in) + L-glutamate(out) + H(+)(out) = L-aspartate(out) + L-glutamate(in) + H(+)(in). The catalysed reaction is 3-sulfino-L-alanine(out) + L-glutamate(in) + H(+)(in) = 3-sulfino-L-alanine(in) + L-glutamate(out) + H(+)(out). It catalyses the reaction 3-sulfino-L-alanine(out) + L-aspartate(in) = 3-sulfino-L-alanine(in) + L-aspartate(out). With respect to regulation, activated by calcium-binding in the mitochondrial intermembrane space. Inhibited by pyridoxal 5'-phosphate, bathophenathroline, mercurials, diethyl pyrocarbonate and N-ethylmaleimide. In terms of biological role, mitochondrial electrogenic aspartate/glutamate antiporter that favors efflux of aspartate and entry of glutamate and proton within the mitochondria as part of the malate-aspartate shuttle. Also mediates the uptake of L-cysteinesulfinate (3-sulfino-L-alanine) by mitochondria in exchange of L-glutamate and proton. Can also exchange L-cysteinesulfinate with aspartate in their anionic form without any proton translocation. Lacks transport activity towards L-glutamine or gamma-aminobutyric acid (GABA). The protein is Electrogenic aspartate/glutamate antiporter SLC25A12, mitochondrial of Homo sapiens (Human).